The chain runs to 475 residues: Cytosolic non-specific dipeptidase (475 aa).

At Ala2 the chain carries N-acetylalanine. Lys9 bears the N6-acetyllysine mark. The residue at position 58 (Ser58) is a Phosphoserine. His99 contacts Mn(2+). Asp101 is a catalytic residue. Asp132 contacts Mn(2+). The active-site Proton acceptor is the Glu166. Residues 166–167, Asp195, and His228 each bind substrate; that span reads EE. Mn(2+) is bound by residues Glu167 and Asp195. Phosphoserine is present on Ser299. The substrate site is built by Thr330, Arg343, Ser417, and His445. His445 serves as a coordination point for Mn(2+).

The protein belongs to the peptidase M20A family. In terms of assembly, homodimer. Requires Mn(2+) as cofactor.

It localises to the cytoplasm. The enzyme catalyses Hydrolysis of dipeptides, preferentially hydrophobic dipeptides including prolyl amino acids.. It catalyses the reaction L-threonyl-L-threonine + H2O = 2 L-threonine. The catalysed reaction is L-threonyl-L-serine + H2O = L-threonine + L-serine. It carries out the reaction L-seryl-L-threonine + H2O = L-threonine + L-serine. The enzyme catalyses L-cysteinylglycine + H2O = L-cysteine + glycine. It catalyses the reaction (S)-lactate + L-phenylalanine = N-[(S)-lactoyl]-L-phenylalanine + H2O. Its function is as follows. Catalyzes the peptide bond hydrolysis in dipeptides, displaying a non-redundant activity toward threonyl dipeptides. Mediates threonyl dipeptide catabolism in a tissue-specific way. Has high dipeptidase activity toward cysteinylglycine, an intermediate metabolite in glutathione metabolism. Metabolizes N-lactoyl-amino acids, both through hydrolysis to form lactic acid and amino acids, as well as through their formation by reverse proteolysis. Plays a role in the regulation of cell cycle arrest and apoptosis. In Pongo abelii (Sumatran orangutan), this protein is Cytosolic non-specific dipeptidase (CNDP2).